Consider the following 97-residue polypeptide: Large ribosomal subunit protein uL23 (97 aa).

It belongs to the universal ribosomal protein uL23 family. Part of the 50S ribosomal subunit. Contacts protein L29, and trigger factor when it is bound to the ribosome.

In terms of biological role, one of the early assembly proteins it binds 23S rRNA. One of the proteins that surrounds the polypeptide exit tunnel on the outside of the ribosome. Forms the main docking site for trigger factor binding to the ribosome. The protein is Large ribosomal subunit protein uL23 of Rhizobium rhizogenes (strain K84 / ATCC BAA-868) (Agrobacterium radiobacter).